Here is a 44-residue protein sequence, read N- to C-terminus: uncharacterized protein (44 aa).

This is an uncharacterized protein from Bacillus subtilis (Bacteriophage phi-105).